The sequence spans 933 residues: Phosphoenolpyruvate carboxylase (933 aa).

Catalysis depends on residues His164 and Lys595.

Belongs to the PEPCase type 1 family. Mg(2+) is required as a cofactor.

The enzyme catalyses oxaloacetate + phosphate = phosphoenolpyruvate + hydrogencarbonate. Forms oxaloacetate, a four-carbon dicarboxylic acid source for the tricarboxylic acid cycle. The sequence is that of Phosphoenolpyruvate carboxylase from Rhodopseudomonas palustris (strain HaA2).